Here is a 324-residue protein sequence, read N- to C-terminus: Olfactory receptor 52I1 (324 aa).

The Extracellular portion of the chain corresponds to 1 to 29 (MLGPAYNHTMETPASFLLVGIPGLQSSHL). Asn7 is a glycosylation site (N-linked (GlcNAc...) asparagine). Residues 30–50 (WLAISLSAMYITALLGNTLIV) traverse the membrane as a helical segment. Residues 51–58 (TAIWMDST) lie on the Cytoplasmic side of the membrane. The helical transmembrane segment at 59–79 (RHEPMYCFLCVLAAVDIVMAS) threads the bilayer. Residues 80–103 (SVVPKMVSIFCSGDSSISFSACFT) lie on the Extracellular side of the membrane. The cysteines at positions 101 and 193 are disulfide-linked. Residues 104–124 (QMFFVHLATAVETGLLLTMAF) traverse the membrane as a helical segment. Residues 125–143 (DRYVAICKPLHYKRILTPQ) are Cytoplasmic-facing. Residues 144-164 (VMLGMSMAVTIRAVTFMTPLS) form a helical membrane-spanning segment. Over 165–200 (WMMNHLPFCGSNVVVHSYCKHIALARLACADPVPSS) the chain is Extracellular. The helical transmembrane segment at 201–221 (LYSLIGSSLMVGSDVAFIAAS) threads the bilayer. At 222-241 (YILILRAVFDLSSKTAQLKA) the chain is on the cytoplasmic side. A helical membrane pass occupies residues 242 to 262 (LSTCGSHVGVMALYYLPGMAS). Topologically, residues 263–278 (IYAAWLGQDIVPLHTQ) are extracellular. A helical transmembrane segment spans residues 279–299 (VLLADLYVIIPATLNPIIYGM). Over 300–324 (RTKQLLEGIWSYLMHFLFDHSNLGS) the chain is Cytoplasmic.

The protein belongs to the G-protein coupled receptor 1 family.

Its subcellular location is the cell membrane. Its function is as follows. Odorant receptor. This chain is Olfactory receptor 52I1 (OR52I1), found in Homo sapiens (Human).